The following is an 850-amino-acid chain: Lon protease (850 aa).

Positions 38-232 constitute a Lon N-terminal domain; sequence LPVLPLRDVV…LLVGLVDGEI (195 aa). 384–391 contributes to the ATP binding site; that stretch reads GPPGVGKT. Positions 634-815 constitute a Lon proteolytic domain; that stretch reads ENEIGLVTGL…DEVLDLALER (182 aa). Active-site residues include Ser-721 and Lys-764. Positions 819 to 850 are disordered; that stretch reads PKKAGKEKARKTAPRVAVRGKSRSTPGTRVKH. The segment covering 821–840 has biased composition (basic residues); the sequence is KAGKEKARKTAPRVAVRGKS. Residues 841-850 are compositionally biased toward polar residues; sequence RSTPGTRVKH.

It belongs to the peptidase S16 family. In terms of assembly, homohexamer. Organized in a ring with a central cavity.

Its subcellular location is the cytoplasm. The enzyme catalyses Hydrolysis of proteins in presence of ATP.. ATP-dependent serine protease that mediates the selective degradation of mutant and abnormal proteins as well as certain short-lived regulatory proteins. Required for cellular homeostasis and for survival from DNA damage and developmental changes induced by stress. Degrades polypeptides processively to yield small peptide fragments that are 5 to 10 amino acids long. Binds to DNA in a double-stranded, site-specific manner. The sequence is that of Lon protease from Xanthomonas oryzae pv. oryzae (strain KACC10331 / KXO85).